We begin with the raw amino-acid sequence, 588 residues long: Adenine deaminase (588 aa).

It belongs to the metallo-dependent hydrolases superfamily. Adenine deaminase family. In terms of assembly, homodimer. Mn(2+) serves as cofactor.

It catalyses the reaction adenine + H2O + H(+) = hypoxanthine + NH4(+). The chain is Adenine deaminase from Escherichia coli (strain SE11).